The sequence spans 730 residues: Synaptogenesis protein syg-1 (730 aa).

The N-terminal stretch at 1 to 18 (MVRWQTWPLLLLFQLVTC) is a signal peptide. Over 19–551 (QQLQQRIVEA…WIVITAKFDR (533 aa)) the chain is Extracellular. Ig-like domains are found at residues 23 to 123 (QRIV…AKLT), 131 to 265 (PKIV…VKLS), 270 to 352 (PQIN…IKLN), 357 to 433 (ARIM…QILS), and 441 to 540 (PPTV…RNIL). Disulfide bonds link C44-C104, C152-C246, C292-C336, C378-C420, and C462-C519. N-linked (GlcNAc...) asparagine glycans are attached at residues N93 and N206. A helical membrane pass occupies residues 552–572 (MVALAIISAGVLLVSLLCCLC). Over 573–730 (MCRSNCRSRK…RPISRTSTHV (158 aa)) the chain is Cytoplasmic.

It belongs to the immunoglobulin superfamily. In terms of assembly, interacts with skr-1. Interacts with syg-2. Interacts with the WAVE regulatory complex; the interaction leads to formation of a synaptic F-actin network that is required for synapse formation and axon branching. Expression in head motor neurons, occasionally in HSN neurons and weakly in other cells in the vulval region. Expressed in the primary synapse region of HSNL motor neuron.

Its subcellular location is the cell membrane. The protein resides in the cell projection. It is found in the axon. It localises to the synapse. Cell adhesion protein. Involved in synapse formation in the HSNL egg-laying motor neuron. Inhibits assembly of the SCF(sel-10) E3 ubiquitin ligase complex at synapses, and protects them from elimination. Also required for F-actin assembly at the synaptic region and for axon branch formation. This is Synaptogenesis protein syg-1 from Caenorhabditis elegans.